Here is a 498-residue protein sequence, read N- to C-terminus: Inosine-5'-monophosphate dehydrogenase (498 aa).

2 consecutive CBS domains span residues 98-155 (MVVN…EQKI) and 159-216 (MTRE…PHAS). NAD(+)-binding positions include Asp253 and 303 to 305 (GIG). K(+) is bound by residues Gly305 and Gly307. Residue Ser308 participates in IMP binding. Cys310 lines the K(+) pocket. Cys310 serves as the catalytic Thioimidate intermediate. IMP is bound by residues 343–345 (DGG), 366–367 (GS), and 390–394 (YRGMG). Arg406 serves as the catalytic Proton acceptor. An IMP-binding site is contributed by Glu421. 3 residues coordinate K(+): Glu475, Ser476, and His477.

Belongs to the IMPDH/GMPR family. In terms of assembly, homotetramer. K(+) serves as cofactor.

The catalysed reaction is IMP + NAD(+) + H2O = XMP + NADH + H(+). It participates in purine metabolism; XMP biosynthesis via de novo pathway; XMP from IMP: step 1/1. Its activity is regulated as follows. Mycophenolic acid (MPA) is a non-competitive inhibitor that prevents formation of the closed enzyme conformation by binding to the same site as the amobile flap. In contrast, mizoribine monophosphate (MZP) is a competitive inhibitor that induces the closed conformation. MPA is a potent inhibitor of mammalian IMPDHs but a poor inhibitor of the bacterial enzymes. MZP is a more potent inhibitor of bacterial IMPDH. Its function is as follows. Catalyzes the conversion of inosine 5'-phosphate (IMP) to xanthosine 5'-phosphate (XMP), the first committed and rate-limiting step in the de novo synthesis of guanine nucleotides, and therefore plays an important role in the regulation of cell growth. This chain is Inosine-5'-monophosphate dehydrogenase, found in Rhizobium tropici.